The sequence spans 364 residues: UDP-N-acetylglucosamine--N-acetylmuramyl-(pentapeptide) pyrophosphoryl-undecaprenol N-acetylglucosamine transferase (364 aa).

UDP-N-acetyl-alpha-D-glucosamine is bound by residues 10 to 12 (TGG), asparagine 124, serine 195, isoleucine 250, and glutamine 295.

Belongs to the glycosyltransferase 28 family. MurG subfamily.

It localises to the cell membrane. It carries out the reaction Mur2Ac(oyl-L-Ala-gamma-D-Glu-L-Lys-D-Ala-D-Ala)-di-trans,octa-cis-undecaprenyl diphosphate + UDP-N-acetyl-alpha-D-glucosamine = beta-D-GlcNAc-(1-&gt;4)-Mur2Ac(oyl-L-Ala-gamma-D-Glu-L-Lys-D-Ala-D-Ala)-di-trans,octa-cis-undecaprenyl diphosphate + UDP + H(+). It participates in cell wall biogenesis; peptidoglycan biosynthesis. Functionally, cell wall formation. Catalyzes the transfer of a GlcNAc subunit on undecaprenyl-pyrophosphoryl-MurNAc-pentapeptide (lipid intermediate I) to form undecaprenyl-pyrophosphoryl-MurNAc-(pentapeptide)GlcNAc (lipid intermediate II). This Levilactobacillus brevis (strain ATCC 367 / BCRC 12310 / CIP 105137 / JCM 1170 / LMG 11437 / NCIMB 947 / NCTC 947) (Lactobacillus brevis) protein is UDP-N-acetylglucosamine--N-acetylmuramyl-(pentapeptide) pyrophosphoryl-undecaprenol N-acetylglucosamine transferase.